Consider the following 880-residue polypeptide: Pentatricopeptide repeat-containing protein At3g07290, mitochondrial (880 aa).

Residues 1 to 89 (MLLIHIRSTR…RSDNDICVRF (89 aa)) constitute a mitochondrion transit peptide. 19 PPR repeats span residues 159–193 (NYPC…GFVV), 194–228 (GMID…GFVL), 229–259 (DSHI…MSKE), 265–299 (NSVS…GCQP), 300–334 (STRT…GCKP), 335–369 (NVHT…RIFP), 370–404 (SVIT…ACKP), 405–439 (NVRT…GLSP), 440–474 (DIVS…DIEP), 475–509 (DCLT…GISL), 510–544 (DEVT…RILT), 545–579 (TPHS…GLVP), 580–614 (SVVT…GCLP), 615–649 (NVYP…GVSP), 650–684 (NHVT…GYEL), 685–721 (NDRI…ETDP), 738–768 (ISGL…VLER), 772–806 (LEKA…GFVP), and 807–842 (SFKS…GVVE).

This sequence belongs to the PPR family. P subfamily.

It localises to the mitochondrion. The protein is Pentatricopeptide repeat-containing protein At3g07290, mitochondrial of Arabidopsis thaliana (Mouse-ear cress).